Reading from the N-terminus, the 871-residue chain is Valine--tRNA ligase (871 aa).

The short motif at 47-57 (PNVTGRLHIGH) is the 'HIGH' region element. Residues 534 to 538 (KMSKS) carry the 'KMSKS' region motif. An ATP-binding site is contributed by Lys537. A coiled-coil region spans residues 805–871 (DLTPILNRLN…IEEELARLTR (67 aa)).

This sequence belongs to the class-I aminoacyl-tRNA synthetase family. ValS type 1 subfamily. In terms of assembly, monomer.

It is found in the cytoplasm. The catalysed reaction is tRNA(Val) + L-valine + ATP = L-valyl-tRNA(Val) + AMP + diphosphate. In terms of biological role, catalyzes the attachment of valine to tRNA(Val). As ValRS can inadvertently accommodate and process structurally similar amino acids such as threonine, to avoid such errors, it has a 'posttransfer' editing activity that hydrolyzes mischarged Thr-tRNA(Val) in a tRNA-dependent manner. This Nitratiruptor sp. (strain SB155-2) protein is Valine--tRNA ligase.